Here is a 957-residue protein sequence, read N- to C-terminus: UvrABC system protein A (957 aa).

Position 33-40 (33-40 (GLSGSGKS)) interacts with ATP. Residues 252-279 (CPHCGFSIGELEPRLFSFNSPFGACPTC) form a C4-type zinc finger. ABC transporter domains are found at residues 309–587 (WTPI…PNSL) and 607–935 (PDGR…RYLK). 639-646 (GVSGSGKS) lines the ATP pocket. The segment at 738–764 (CEACRGDGIIKIEMHFLPDVYVPCEVC) adopts a C4-type zinc-finger fold.

This sequence belongs to the ABC transporter superfamily. UvrA family. Forms a heterotetramer with UvrB during the search for lesions.

Its subcellular location is the cytoplasm. The UvrABC repair system catalyzes the recognition and processing of DNA lesions. UvrA is an ATPase and a DNA-binding protein. A damage recognition complex composed of 2 UvrA and 2 UvrB subunits scans DNA for abnormalities. When the presence of a lesion has been verified by UvrB, the UvrA molecules dissociate. This chain is UvrABC system protein A, found in Bacillus subtilis (strain 168).